The following is a 152-amino-acid chain: Adrenodoxin-like protein 2, mitochondrial (152 aa).

A mitochondrion-targeting transit peptide spans 1–29 (MLVINSCRAASRLALRSLNLRSPIATRTF). Residues 41-146 (VNITFVRANG…GLEVHVPSTI (106 aa)) form the 2Fe-2S ferredoxin-type domain. Residues cysteine 80, cysteine 86, cysteine 89, and cysteine 127 each contribute to the [2Fe-2S] cluster site.

Belongs to the adrenodoxin/putidaredoxin family. It depends on [2Fe-2S] cluster as a cofactor.

It localises to the mitochondrion. Functionally, required for ecdysteroidogenesis in the prothoracic gland which is necessary for larval to pupal transition. This Drosophila melanogaster (Fruit fly) protein is Adrenodoxin-like protein 2, mitochondrial.